A 528-amino-acid polypeptide reads, in one-letter code: Adhesion G-protein coupled receptor G5 (528 aa).

The signal sequence occupies residues 1–21; that stretch reads MDHCGALFLCLCLLTLQNATT. Topologically, residues 22-245 are extracellular; that stretch reads ETWEELLSYM…SPALVPAELL (224 aa). N-linked (GlcNAc...) asparagine glycans are attached at residues N58, N65, N146, N147, N173, and N179. One can recognise a GAIN-B domain in the interval 78 to 239; it reads FKLSCDFSGL…AVLMQLSPAL (162 aa). Disulfide bonds link C189–C221 and C209–C223. Residues 189 to 239 form a GPS region; sequence CVFWKEGARKQPWGGWSPEGCRTEQPSHSQVLCRCNHLTYFAVLMQLSPAL. A stachel region spans residues 228-236; it reads YFAVLMQLS. A helical membrane pass occupies residues 246 to 271; sequence APLTYISLVGCSISIVASLITVLLHF. Over 272–280 the chain is Cytoplasmic; the sequence is HFRKQSDSL. The chain crosses the membrane as a helical span at residues 281–304; the sequence is TRIHMNLHASVLLLNIAFLLSPAF. Residues 305–314 lie on the Extracellular side of the membrane; sequence AMSPVPGSAC. Cysteines 314 and 404 form a disulfide. A helical transmembrane segment spans residues 315 to 340; it reads TALAAALHYALLSCLTWMAIEGFNLY. Residues 341–353 are Cytoplasmic-facing; the sequence is LLLGRVYNIYIRR. Residues 354–377 traverse the membrane as a helical segment; the sequence is YVFKLGVLGWGAPALLVLLSLSVK. Residues 378–410 lie on the Extracellular side of the membrane; it reads SSVYGPCTIPVFDSWENGTGFQNMSICWVRSPV. N-linked (GlcNAc...) asparagine glycosylation is found at N394 and N400. A helical membrane pass occupies residues 411–435; sequence VHSVLVMGYGGLTSLFNLVVLAWAL. At 436-455 the chain is on the cytoplasmic side; that stretch reads WTLRRLRERADAPSVRACHD. Residues 456-477 form a helical membrane-spanning segment; the sequence is TVTVLGLTVLLGTTWALAFFSF. The Extracellular portion of the chain corresponds to 478–481; sequence GVFL. The chain crosses the membrane as a helical span at residues 482–505; the sequence is LPQLFLFTILNSLYGFFLFLWFCS. Topologically, residues 506 to 528 are cytoplasmic; the sequence is QRCRSEAEAKAQIEAFSSSQTTQ.

It belongs to the G-protein coupled receptor 2 family. Adhesion G-protein coupled receptor (ADGR) subfamily. Heterodimer of 2 chains generated by proteolytic processing; the large extracellular N-terminal fragment and the membrane-bound C-terminal fragment predominantly remain associated and non-covalently linked. Autoproteolytically processed at the GPS region of the GAIN-B domain; this cleavage modulates receptor activity. In terms of processing, N-glycsylated. In terms of tissue distribution, expressed in immune cells. Primarily found in granulocytes. Found in eosinophils.

It is found in the cell membrane. Forms a heterodimer of 2 chains generated by proteolytic processing that remain associated through non-covalent interactions mediated by the GAIN-B domain. In the inactivated receptor, the Stachel sequence (also named stalk) is embedded in the GAIN-B domain, where it adopts a beta-strand conformation. On activation, the Stachel moves into the 7 transmembrane region and adopts a twisted hook-shaped configuration that forms contacts within the receptor, leading to coupling of a G-alpha protein, which activates signaling. The cleaved GAIN-B and N-terminal domains can then dissociate from the rest of the receptor. Its function is as follows. Orphan adhesion G-protein coupled receptor (aGPCR). Ligand binding causes a conformation change that triggers signaling via guanine nucleotide-binding proteins (G proteins) and modulates the activity of downstream effectors, such as adenylate cyclase. ADGRG5 is specifically coupled to G(s) G proteins and mediates activation of adenylate cyclase activity. The chain is Adhesion G-protein coupled receptor G5 from Homo sapiens (Human).